Consider the following 115-residue polypeptide: Parathyroid hormone (115 aa).

Residues 1 to 25 (MMSASTMAKVMILMLAVCLLTQADG) form the signal peptide. A propeptide spanning residues 26-31 (KPVKKR) is cleaved from the precursor. Residues 51 to 69 (RMQWLRKKLQDVHNFVSLG) are important for receptor binding. The interval 76-101 (EGSYQRPTKKEENVLVDGNSKSLGEG) is disordered.

This sequence belongs to the parathyroid hormone family. In terms of assembly, interacts with PTH1R (via N-terminal extracellular domain). In terms of tissue distribution, hypothalamus and parathyroid gland.

Its subcellular location is the secreted. Parathyroid hormone elevates calcium level by dissolving the salts in bone and preventing their renal excretion. Acts by binding to its receptor, PTH1R, activating G protein-coupled receptor signaling. Stimulates [1-14C]-2-deoxy-D-glucose (2DG) transport and glycogen synthesis in osteoblastic cells. This Rattus norvegicus (Rat) protein is Parathyroid hormone (Pth).